Consider the following 558-residue polypeptide: MPLARLPGWLCVVACGLLLLLQHVHGQDSASPIRNTHRGQVRGSFVHVKDTKSGVHAFLGIPFAKPPVGLLRFAPPEDPEPWSGVRDGTSQPAMCLQPDIMNLEDAKEMNLILPPISMSEDCLYLNIYTPTHAQEGSNLPVMVWIHGGGLVVGSASMNDVSKLAATEEIVIVAIQYRLGVLGFFSTGDQHARGNWGYLDQVAALRWVQKNIAYFGGNRDRVTIFGVSAGGTSVSSHILSPMSKGLFHGAIMQSGVALLPDLISDTSEVVYKTVANLSGCEATDSEALIHCLRAKSKQEILAINQVFKMIPAVVDGEFLPKHPQELLTSMDFHPVPSIIGVNTDECGWGVPMFMGLDHIIKNITRETLPAVLKNTAARMMLPPECSHLLVEEYMGDTEDPETLQAQFREMLGDFMFVIPALQVAHFQRSQAPVYFYEFQHLSSFIKHVRPSHVKADHGDDVAFVFGSYLWDMNLDLTEEEELLKRMMMKYWANFARNGNPNSEGLPSWPVLDHDEQYLQLDTQPAVGRALKARRLQFWTKTLPQKIQELKGSQDKHAEL.

Positions 1 to 26 are cleaved as a signal peptide; that stretch reads MPLARLPGWLCVVACGLLLLLQHVHG. Residues C95 and C122 are joined by a disulfide bond. K209 carries the post-translational modification N6-succinyllysine. Catalysis depends on S227, which acts as the Acyl-ester intermediate. A glycan (N-linked (GlcNAc...) asparagine) is linked at N275. Cysteines 279 and 290 form a disulfide. Position 296 is an N6-succinyllysine (K296). The active-site Charge relay system is the E344. N361 carries N-linked (GlcNAc...) asparagine glycosylation. The active-site Charge relay system is H456.

This sequence belongs to the type-B carboxylesterase/lipase family.

It is found in the microsome. It carries out the reaction (-)-trans-permethrin + H2O = (3-phenoxyphenyl)methanol + (1S,3R)-3-(2,2-dichlorovinyl)-2,2-dimethylcyclopropanecarboxylate + H(+). The catalysed reaction is all-trans-retinyl hexadecanoate + H2O = all-trans-retinol + hexadecanoate + H(+). Carboxylesterases that catalyzes the hydrolysis of pyrethroids pesticides. Hydrolyzes permethrin faster than cypermethrin. Hydrolyzes retinyl esters. In Mus musculus (Mouse), this protein is Pyrethroid hydrolase Ces2a.